Here is a 143-residue protein sequence, read N- to C-terminus: Small ribosomal subunit protein uS11c (143 aa).

It belongs to the universal ribosomal protein uS11 family. As to quaternary structure, part of the 30S ribosomal subunit.

It localises to the plastid. The protein resides in the chloroplast. This chain is Small ribosomal subunit protein uS11c, found in Cenchrus americanus (Pearl millet).